Reading from the N-terminus, the 212-residue chain is Thymidylate kinase (212 aa).

Position 10–17 (10–17) interacts with ATP; that stretch reads GLEGAGKT.

This sequence belongs to the thymidylate kinase family.

The enzyme catalyses dTMP + ATP = dTDP + ADP. Functionally, phosphorylation of dTMP to form dTDP in both de novo and salvage pathways of dTTP synthesis. The polypeptide is Thymidylate kinase (Yersinia pseudotuberculosis serotype O:3 (strain YPIII)).